Here is a 414-residue protein sequence, read N- to C-terminus: Glutamyl-tRNA reductase (414 aa).

Substrate is bound by residues 49–52 (TCNR), Ser108, 113–115 (EPQ), and Gln119. Cys50 serves as the catalytic Nucleophile. 188-193 (GAGQTG) is an NADP(+) binding site.

This sequence belongs to the glutamyl-tRNA reductase family. In terms of assembly, homodimer.

The catalysed reaction is (S)-4-amino-5-oxopentanoate + tRNA(Glu) + NADP(+) = L-glutamyl-tRNA(Glu) + NADPH + H(+). It functions in the pathway porphyrin-containing compound metabolism; protoporphyrin-IX biosynthesis; 5-aminolevulinate from L-glutamyl-tRNA(Glu): step 1/2. In terms of biological role, catalyzes the NADPH-dependent reduction of glutamyl-tRNA(Glu) to glutamate 1-semialdehyde (GSA). This Francisella tularensis subsp. novicida (strain U112) protein is Glutamyl-tRNA reductase.